The following is a 335-amino-acid chain: Ethanol acetyltransferase 1 (335 aa).

In terms of domain architecture, AB hydrolase-1 spans 48-300 (PIVFVHGIFG…NSAHDILDQR (253 aa)). Catalysis depends on charge relay system residues Ser-121, Asp-145, and His-294.

This sequence belongs to the AB hydrolase superfamily.

It localises to the mitochondrion. The catalysed reaction is ethanol + acetyl-CoA = ethyl acetate + CoA. The enzyme catalyses acetyl-CoA + H2O = acetate + CoA + H(+). It catalyses the reaction ethyl acetate + H2O = ethanol + acetate + H(+). Functionally, alcohol acetyltransferase that catalyzes the synthesis of ethyl acetate from ethanol and acetyl-CoA. Can also function as a thioesterase by hydrolyzing acetyl-CoA in the absence of ethanol, as well as esterase hydrolyzing ethyl acetate. The sequence is that of Ethanol acetyltransferase 1 (EAT1) from Cyberlindnera fabianii (Yeast).